The primary structure comprises 345 residues: Serine/arginine-rich splicing factor 6 (345 aa).

The RRM 1 domain occupies 1-72 (MPRVYIGRLS…ERVIVEHARG (72 aa)). Residues S45, S81, and S84 each carry the phosphoserine modification. The interval 75 to 102 (RDRDGYSYGSRSGGGGYSSRRTSGRDKY) is disordered. Residues 110-183 (FRLIVENLSS…RNIRLIEDKP (74 aa)) enclose the RRM 2 domain. K165 is subject to N6-acetyllysine. A disordered region spans residues 176-345 (IRLIEDKPRT…RSRSRSSSRD (170 aa)). A Glycyl lysine isopeptide (Lys-Gly) (interchain with G-Cter in SUMO2) cross-link involves residue K182. The segment covering 185–250 (TSHRRSYSGS…RKSRSKSKSK (66 aa)) has biased composition (basic residues). 2 stretches are compositionally biased toward basic and acidic residues: residues 264-273 (RSKDEYEKSR) and 282-293 (SPKENGKGDIKS). A phosphoserine mark is found at S299 and S301. The residue at position 305 (S305) is a Phosphoserine; by DYRK1A. S316 and S318 each carry phosphoserine. A compositionally biased stretch (basic residues) spans 323–345 (RASRSHSRSRSKSRSRSRSSSRD).

Belongs to the splicing factor SR family. Binds SREK1/SFRS12. Interacts with DYRK1A. In terms of processing, extensively phosphorylated on serine residues in the RS domain. Phosphorylated by DYRK1A, probably in the RS domain. Phosphorylation by DYRK1A modulates alternative splice site selection and inhibits the expression of MAPT/Tau exon 10.

It localises to the nucleus. It is found in the nucleus speckle. Plays a role in constitutive splicing and modulates the selection of alternative splice sites. Plays a role in the alternative splicing of MAPT/Tau exon 10. Binds to alternative exons of TNC pre-mRNA and promotes the expression of alternatively spliced TNC. Plays a role in wound healing and in the regulation of keratinocyte differentiation and proliferation via its role in alternative splicing. The polypeptide is Serine/arginine-rich splicing factor 6 (SRSF6) (Bos taurus (Bovine)).